We begin with the raw amino-acid sequence, 809 residues long: E3 ubiquitin-protein ligase RSP5 (809 aa).

The region spanning 1–105 is the C2 domain; it reads MPSSISVKLV…GHLDEDTATS (105 aa). Disordered regions lie at residues 99–122, 139–240, and 257–298; these read DEDT…KKSN, PSSS…RRTD, and WKRP…DNSS. Residues 108–122 show a composition bias toward basic and acidic residues; that stretch reads RPREETITRDLKKSN. The span at 139–148 shows a compositional bias: polar residues; that stretch reads PSSSPHSQAP. The segment covering 149-183 has biased composition (low complexity); it reads SGHTASSSTNTSSTTRTNGHSTSSTRNHSTSHPSR. Polar residues predominate over residues 184–196; sequence GTAQAVESTLQSG. The segment covering 197–219 has biased composition (low complexity); sequence TTAATNTATTSHRSTNSTSSATR. WW domains lie at 229–262, 331–364, and 387–420; these read GRLP…RPTL, GELP…DPRR, and GPLP…DPRL. Lys258 participates in a covalent cross-link: Glycyl lysine isopeptide (Lys-Gly) (interchain with G-Cter in ubiquitin). Positions 705–809 constitute an HECT domain; the sequence is YRGYQESDEV…VEETIGFGQE (105 aa). The active-site Glycyl thioester intermediate is Cys777.

This sequence belongs to the RSP5/NEDD4 family. As to quaternary structure, component of the RSP5-BUL1/2 ubiquitin ligase complex composed of at least RSP5 and BUL1 or BUL2. Component of the RSP5-UBA1-UBC5 ubiquitin ligase complex composed of E3 RSP5, E1 UBA1 and E2 UBC5. Also forms a ternary complex with RUP1 and UBP2. Interacts (via WW domains) with LSB1. Interacts (via WW domains) with PIN3/LSB2. Interacts (via WW domains) with RCR1 (via PY motifs). Interacts with UBP2; the interaction is direct. Interacts with HSE1. Interacts with LAS17. Interacts with ROG3. Interacts with ROD1. Interacts with RVS167. Interacts with ubiquitin. The ubiquitination appears to be the result of an intramolecular transfer of ubiquitin.

The protein localises to the cytoplasm. It is found in the nucleus. Its subcellular location is the cytoskeleton. The protein resides in the actin patch. The enzyme catalyses S-ubiquitinyl-[E2 ubiquitin-conjugating enzyme]-L-cysteine + [acceptor protein]-L-lysine = [E2 ubiquitin-conjugating enzyme]-L-cysteine + N(6)-ubiquitinyl-[acceptor protein]-L-lysine.. The protein operates within protein modification; protein ubiquitination. In terms of biological role, E3 ubiquitin-protein ligase which accepts ubiquitin from an E2 ubiquitin-conjugating enzyme in the form of a thioester and then directly transfers the ubiquitin to targeted substrates. Component of a RSP5 ubiquitin ligase complex which specifies polyubiquitination and intracellular trafficking of the general amino acid permease GAP1 as well as other cell surface proteins like GAP1, FUR4, MAL61, PMA1 and STE2. The RSP5-BUL1/2 complex is also necessary for the heat-shock element (HSE)-mediated gene expression, nitrogen starvation GLN3-dependent transcription, pressure-induced differential regulation of the two tryptophan permeases TAT1 and TAT2 and sorting efficiency into multivesicular bodies. The RSP5-UBA1-UBC5 ubiquitin ligase complex ubiquitinates RPO21 forming 'Lys-63'-linked polyubiquitin chains. Plays a role in tolerance to o-dinitrobenzene. Involved in actin cytoskeleton organization and dynamics. Ubiquitinates the LAS17-binding proteins LSB1 and PIN3/LSB2 without directing them for degradation and affects LAS17 levels in a SLA1-dependent and LSB1/2-independent manner. Also involved in the degradation of non-functional 18S rRNAs in response to stalled ribosomes by mediating polyubiquitination of monoubiquitinated RPS3/uS3: mediates formation of 'Lys-63'-linked polyubiquitin chains on monoubiquitined RPS3/uS3, promoting the degradation of non-functional 18S rRNAs. This chain is E3 ubiquitin-protein ligase RSP5 (RSP5), found in Saccharomyces cerevisiae (strain ATCC 204508 / S288c) (Baker's yeast).